Reading from the N-terminus, the 87-residue chain is Selenoprotein W (87 aa).

The segment at residues 10 to 13 (CGAU) is a cross-link (cysteinyl-selenocysteine (Cys-Sec); redox-active). Position 13 (selenocysteine 13) is a non-standard amino acid, selenocysteine. Cysteine 37 is subject to S-glutathionyl cysteine.

Belongs to the SelWTH family. Selenoprotein W subfamily. As to quaternary structure, interacts with DPYSL2, PRDX1, YWHAB, YWHAG, HSP70 and HSP90. As to expression, detected in muscle, heart, tongue, brain, lung, spleen, kidney and liver. Highest levels expressed in muscle and heart whereas lowest levels detected in liver (at protein level).

It localises to the cytoplasm. In terms of biological role, plays a role as a glutathione (GSH)-dependent antioxidant. May be involved in a redox-related process. May play a role in the myopathies of selenium deficiency. The protein is Selenoprotein W of Ovis aries (Sheep).